The sequence spans 117 residues: Immunoglobulin heavy variable 3-5 (117 aa).

The signal sequence occupies residues 1–18 (MKMFTLLYLLTVVPGILS). The region spanning 19–117 (DVQLQESGPG…EDTATYYCAR (99 aa)) is the Ig-like domain. Cysteines 40 and 115 form a disulfide.

This is Immunoglobulin heavy variable 3-5 from Mus musculus (Mouse).